The sequence spans 279 residues: Ankyrin repeat domain-containing protein 7 (279 aa).

The segment covering 1-11 has biased composition (basic residues); that stretch reads MKKFFPFRGKR. The tract at residues 1–25 is disordered; that stretch reads MKKFFPFRGKRKTDDSHSHSSEVPI. 5 ANK repeats span residues 80–109, 113–142, 146–175, 179–208, and 212–241; these read RSRT…KINV, ENRT…DPNL, YSNT…NLEA, DGHT…DVNA, and NHRT…DLAH.

The polypeptide is Ankyrin repeat domain-containing protein 7 (Ankrd7) (Mus musculus (Mouse)).